A 230-amino-acid polypeptide reads, in one-letter code: Probable septum site-determining protein MinC (230 aa).

Belongs to the MinC family. In terms of assembly, interacts with MinD and FtsZ.

In terms of biological role, cell division inhibitor that blocks the formation of polar Z ring septums. Rapidly oscillates between the poles of the cell to destabilize FtsZ filaments that have formed before they mature into polar Z rings. Prevents FtsZ polymerization. In Erwinia tasmaniensis (strain DSM 17950 / CFBP 7177 / CIP 109463 / NCPPB 4357 / Et1/99), this protein is Probable septum site-determining protein MinC.